We begin with the raw amino-acid sequence, 225 residues long: Holliday junction branch migration complex subunit RuvA (225 aa).

A domain I region spans residues 1–71 (MISWINGDLV…EDSDLLFGFT (71 aa)). Residues 72 to 150 (SKDQKNFFIE…SEILSEEEKS (79 aa)) form a domain II region. Residues 151-161 (KDEFEIKDPEI) form a flexible linker region. Positions 161 to 225 (IIKMIEDLQL…LDEDSSNKDR (65 aa)) are domain III.

It belongs to the RuvA family. In terms of assembly, homotetramer. Forms an RuvA(8)-RuvB(12)-Holliday junction (HJ) complex. HJ DNA is sandwiched between 2 RuvA tetramers; dsDNA enters through RuvA and exits via RuvB. An RuvB hexamer assembles on each DNA strand where it exits the tetramer. Each RuvB hexamer is contacted by two RuvA subunits (via domain III) on 2 adjacent RuvB subunits; this complex drives branch migration. In the full resolvosome a probable DNA-RuvA(4)-RuvB(12)-RuvC(2) complex forms which resolves the HJ.

The protein resides in the cytoplasm. In terms of biological role, the RuvA-RuvB-RuvC complex processes Holliday junction (HJ) DNA during genetic recombination and DNA repair, while the RuvA-RuvB complex plays an important role in the rescue of blocked DNA replication forks via replication fork reversal (RFR). RuvA specifically binds to HJ cruciform DNA, conferring on it an open structure. The RuvB hexamer acts as an ATP-dependent pump, pulling dsDNA into and through the RuvAB complex. HJ branch migration allows RuvC to scan DNA until it finds its consensus sequence, where it cleaves and resolves the cruciform DNA. This Prochlorococcus marinus (strain AS9601) protein is Holliday junction branch migration complex subunit RuvA.